The chain runs to 432 residues: Ornithine decarboxylase, chloroplastic (432 aa).

Lys95 bears the N6-(pyridoxal phosphate)lysine mark. Pyridoxal 5'-phosphate is bound by residues Ser227, Gly265, and 298 to 301 (EPGR). 341–342 (YD) contacts substrate. The active-site Proton donor; shared with dimeric partner is Cys377. Position 378 (Asp378) interacts with substrate. Tyr406 contacts pyridoxal 5'-phosphate.

Belongs to the Orn/Lys/Arg decarboxylase class-II family. In terms of assembly, homodimer. Only the dimer is catalytically active, as the active sites are constructed of residues from both monomers. Requires pyridoxal 5'-phosphate as cofactor.

The protein resides in the plastid. It localises to the chloroplast. The enzyme catalyses L-lysine + H(+) = cadaverine + CO2. It catalyses the reaction L-ornithine + H(+) = putrescine + CO2. The protein operates within alkaloid biosynthesis; nicotine biosynthesis. It participates in amine and polyamine biosynthesis; putrescine biosynthesis via L-ornithine pathway; putrescine from L-ornithine: step 1/1. With respect to regulation, repressed by alpha-difluoromethylornithine (DFMO), 5,5'-dithiobis-(2-nitrobenzoic acid) (DTNB) and salicylaldehyde. Functionally, involved in the biosynthesis of pyridine alkaloid natural products, leading mainly to the production of anabasine, anatabine, nicotine and nornicotine, effective deterrents against herbivores with antiparasitic and pesticide properties (neurotoxins); nornicotine serves as the precursor in the synthesis of the carcinogen compound N'-nitrosonornicotine (NNN). Catalyzes the first and rate-limiting step of polyamine biosynthesis that converts ornithine into putrescine, which is the precursor for the polyamines, spermidine and spermine. Can also use, with a lower efficiency, L-lysine as substrate to produce cadaverine. Polyamines are essential for cell proliferation and are implicated in cellular processes, ranging from DNA replication to apoptosis. The sequence is that of Ornithine decarboxylase, chloroplastic from Nicotiana glutinosa (Tobacco).